The primary structure comprises 82 residues: RNA-binding protein GWCH70_0105 (82 aa).

This sequence belongs to the eukaryotic ribosomal protein eL8 family.

The sequence is that of RNA-binding protein GWCH70_0105 from Geobacillus sp. (strain WCH70).